Here is a 574-residue protein sequence, read N- to C-terminus: Ankyrin repeat protein B18 (574 aa).

6 ANK repeats span residues 56–87, 135–164, 167–213, 217–249, 253–285, and 327–356; these read TGYT…DVTI, IKSR…DPNF, DGYT…NLNA, CGNT…NFEI, HGLT…NVGE, and EGKT…DINA. Residues 541 to 574 enclose the F-box domain; that stretch reads KCLLTLLPSEIIYEILYMLTIYDLYNISYPPTKV.

The protein is Ankyrin repeat protein B18 of Variola virus (isolate Human/India/Ind3/1967) (VARV).